Here is a 397-residue protein sequence, read N- to C-terminus: Argininosuccinate synthase (397 aa).

Ala-9 to Ser-17 lines the ATP pocket. Tyr-86 contacts L-citrulline. Gly-116 lines the ATP pocket. Residues Thr-118, Asn-122, and Asp-123 each coordinate L-aspartate. Asn-122 provides a ligand contact to L-citrulline. 4 residues coordinate L-citrulline: Arg-126, Ser-174, Glu-259, and Tyr-271.

It belongs to the argininosuccinate synthase family. Type 1 subfamily. As to quaternary structure, homotetramer.

It is found in the cytoplasm. It catalyses the reaction L-citrulline + L-aspartate + ATP = 2-(N(omega)-L-arginino)succinate + AMP + diphosphate + H(+). Its pathway is amino-acid biosynthesis; L-arginine biosynthesis; L-arginine from L-ornithine and carbamoyl phosphate: step 2/3. The polypeptide is Argininosuccinate synthase (Lactococcus lactis subsp. cremoris (strain SK11)).